The chain runs to 163 residues: Nucleotide-binding protein AM1_1863 (163 aa).

Belongs to the YajQ family.

Functionally, nucleotide-binding protein. This chain is Nucleotide-binding protein AM1_1863, found in Acaryochloris marina (strain MBIC 11017).